The primary structure comprises 66 residues: KEGYIVNHSTGCKYECYKLGDNDYCLRECKLQYGKGAGGYCYAFGCWCTHLYEQAVVWPLPKKTCN.

The LCN-type CS-alpha/beta domain occupies 1-66; it reads KEGYIVNHST…VWPLPKKTCN (66 aa). 4 cysteine pairs are disulfide-bonded: Cys12-Cys65, Cys16-Cys41, Cys25-Cys46, and Cys29-Cys48.

Expressed by the venom gland.

The protein resides in the secreted. Is susceptible to be slightly neutralized by human antibodies scFvs 10FG2. In terms of biological role, beta toxins bind voltage-independently at site-4 of sodium channels (Nav) and reduces peak current and shifts the voltage of activation toward more negative potentials thereby affecting sodium channel activation and promoting spontaneous and repetitive firing. This toxin is slightly toxic to mice. The polypeptide is Beta-mammal toxin Cv2 (Centruroides villegasi (Scorpion)).